The following is a 500-amino-acid chain: Bifunctional protein GlmU (500 aa).

The tract at residues M1–R242 is pyrophosphorylase. UDP-N-acetyl-alpha-D-glucosamine-binding positions include L10 to G13, K24, Q81, and G86 to T87. D112 contacts Mg(2+). UDP-N-acetyl-alpha-D-glucosamine-binding residues include G151, E167, N182, and N240. Position 240 (N240) interacts with Mg(2+). Residues V243 to A263 are linker. Positions G264–Q500 are N-acetyltransferase. Positions 345 and 363 each coordinate UDP-N-acetyl-alpha-D-glucosamine. The active-site Proton acceptor is the H375. UDP-N-acetyl-alpha-D-glucosamine-binding residues include Y378 and N389. Residues A392, N398–Y399, S417, and A435 each bind acetyl-CoA. The tract at residues A472–Q500 is disordered. A compositionally biased stretch (basic and acidic residues) spans H482–Q500.

In the N-terminal section; belongs to the N-acetylglucosamine-1-phosphate uridyltransferase family. This sequence in the C-terminal section; belongs to the transferase hexapeptide repeat family. As to quaternary structure, homotrimer. Mg(2+) is required as a cofactor.

The protein localises to the cytoplasm. It carries out the reaction alpha-D-glucosamine 1-phosphate + acetyl-CoA = N-acetyl-alpha-D-glucosamine 1-phosphate + CoA + H(+). The enzyme catalyses N-acetyl-alpha-D-glucosamine 1-phosphate + UTP + H(+) = UDP-N-acetyl-alpha-D-glucosamine + diphosphate. It functions in the pathway nucleotide-sugar biosynthesis; UDP-N-acetyl-alpha-D-glucosamine biosynthesis; N-acetyl-alpha-D-glucosamine 1-phosphate from alpha-D-glucosamine 6-phosphate (route II): step 2/2. Its pathway is nucleotide-sugar biosynthesis; UDP-N-acetyl-alpha-D-glucosamine biosynthesis; UDP-N-acetyl-alpha-D-glucosamine from N-acetyl-alpha-D-glucosamine 1-phosphate: step 1/1. It participates in bacterial outer membrane biogenesis; LPS lipid A biosynthesis. Catalyzes the last two sequential reactions in the de novo biosynthetic pathway for UDP-N-acetylglucosamine (UDP-GlcNAc). The C-terminal domain catalyzes the transfer of acetyl group from acetyl coenzyme A to glucosamine-1-phosphate (GlcN-1-P) to produce N-acetylglucosamine-1-phosphate (GlcNAc-1-P), which is converted into UDP-GlcNAc by the transfer of uridine 5-monophosphate (from uridine 5-triphosphate), a reaction catalyzed by the N-terminal domain. The protein is Bifunctional protein GlmU of Rhodococcus jostii (strain RHA1).